A 565-amino-acid polypeptide reads, in one-letter code: Sodium/hydrogen exchanger 9B1 (565 aa).

Basic and acidic residues-rich tracts occupy residues 1–14 (MSEH…KDDG) and 23–86 (MSKD…ETQT). A disordered region spans residues 1 to 112 (MSEHDVESNK…RGTNSYCPPQ (112 aa)). Helical transmembrane passes span 122 to 142 (GAAL…EVLP), 146 to 166 (LFGL…LEFI), 167 to 187 (KIPV…GFTI), 206 to 223 (ALRN…GLGL), 238 to 258 (LSFG…HFIM), 266 to 286 (FLLG…NMLM), 311 to 331 (IVAI…GSVI), 341 to 361 (VLIG…FPSG), 371 to 391 (AFLV…IGLH), 419 to 439 (IVAN…GTEV), 449 to 469 (IGMC…STFV), 482 to 502 (VFIA…GPLA), and 523 to 543 (VAFL…GILG).

It belongs to the monovalent cation:proton antiporter 1 (CPA1) transporter (TC 2.A.36) family. Testis-specific. Expressed in the spermatids and spermatozoa (at protein level). Specifically present in the principal piece of sperm tail (at protein level).

The protein localises to the cell projection. The protein resides in the cilium. Its subcellular location is the flagellum membrane. Its function is as follows. Sperm-specific Na(+)/H(+) exchanger involved in intracellular pH regulation of spermatozoa. Involved in sperm motility and fertility. This Mus musculus (Mouse) protein is Sodium/hydrogen exchanger 9B1.